The primary structure comprises 431 residues: MVGLEKNDPLMLARQLPIKSVALILAGGRGTRLKDLTNKRAKPAVHFGGKFRIIDFALSNCINSGIRRIGVITQYQSHTLVQHIQRGWSFFNEEMNEFVDLLPAQQRMKGENWYRGTADAVTQNLDIIRRYKAEYVVILAGDHIYKQDYSRMLIDHVEKGARCTVACMPVPIQEASAFGVMAVDQDEKIIEFVEKPANPPSMPNDPTRSLASMGIYVFDADYLYELLEEDDNDENSSHDFGKDIIPKITQAGMAYAHPFPLSCVQSDPDSEPYWRDVGTLEAYWKANLDLASVVPELDMYDQHWPIRTYNESLPPAKFVQDRSGSHGMTLNSLVSGGCVISGSVVVQSVLFSRVRVNSFCNIDSAVLLPEVWVGRSCRLRRCVIDRACVIPEGMVIGENAEEDARRFYRSEEGIVLVTREMLRKLGHKQER.

A beta-D-fructose 1,6-bisphosphate-binding site is contributed by Lys-39. Arg-40, His-46, and Arg-52 together coordinate AMP. Tyr-114 contacts alpha-D-glucose 1-phosphate. Arg-130 contributes to the AMP binding site. Alpha-D-glucose 1-phosphate-binding positions include Gly-179, 194–195, and Ser-212; that span reads EK. 2 residues coordinate AMP: Glu-370 and Arg-386. Beta-D-fructose 1,6-bisphosphate is bound by residues 419–423 and 429–431; these read REMLR and QER.

This sequence belongs to the bacterial/plant glucose-1-phosphate adenylyltransferase family. Homotetramer.

It carries out the reaction alpha-D-glucose 1-phosphate + ATP + H(+) = ADP-alpha-D-glucose + diphosphate. The protein operates within glycan biosynthesis; glycogen biosynthesis. With respect to regulation, allosterically activated by fructose-1,6-bisphosphate (F16BP) and inhibited by AMP. Functionally, involved in the biosynthesis of ADP-glucose, a building block required for the elongation reactions to produce glycogen. Catalyzes the reaction between ATP and alpha-D-glucose 1-phosphate (G1P) to produce pyrophosphate and ADP-Glc. In Escherichia fergusonii (strain ATCC 35469 / DSM 13698 / CCUG 18766 / IAM 14443 / JCM 21226 / LMG 7866 / NBRC 102419 / NCTC 12128 / CDC 0568-73), this protein is Glucose-1-phosphate adenylyltransferase.